Reading from the N-terminus, the 274-residue chain is Large ribosomal subunit protein uL2 (274 aa).

Residues 223 to 274 (VAMNPVDHPHGGGEGRTSGGRHPVSPWGMPTKGFKTRKNKSTDKYIVRRRNK) are disordered.

It belongs to the universal ribosomal protein uL2 family. Part of the 50S ribosomal subunit. Forms a bridge to the 30S subunit in the 70S ribosome.

One of the primary rRNA binding proteins. Required for association of the 30S and 50S subunits to form the 70S ribosome, for tRNA binding and peptide bond formation. It has been suggested to have peptidyltransferase activity; this is somewhat controversial. Makes several contacts with the 16S rRNA in the 70S ribosome. The polypeptide is Large ribosomal subunit protein uL2 (Aliivibrio fischeri (strain ATCC 700601 / ES114) (Vibrio fischeri)).